A 901-amino-acid chain; its full sequence is Core protein VP3 (901 aa).

This sequence belongs to the orbivirus VP3 family.

It localises to the virion. Functionally, the VP3 protein is one of the five proteins (with VP1, VP4, VP6 and VP7) which form the inner capsid of the virus. The sequence is that of Core protein VP3 (Segment-3) from Antilocapra americana (Pronghorn).